Here is a 246-residue protein sequence, read N- to C-terminus: Acetoacetyl-CoA reductase (246 aa).

NADP(+) is bound by residues 13 to 15, G35, R40, 60 to 62, and 88 to 92; these read GGI, GNV, and NAGIT. Residues D94 and 147-150 contribute to the substrate site; that span reads QFGQ. Y153 acts as the Proton acceptor in catalysis. 183–186 is an NADP(+) binding site; it reads PGYI. Substrate is bound by residues 184-185 and R195; that span reads GY.

It belongs to the short-chain dehydrogenases/reductases (SDR) family. In terms of assembly, homotetramer.

The protein resides in the cytoplasm. It carries out the reaction a (3R)-3-hydroxyacyl-CoA + NADP(+) = a 3-oxoacyl-CoA + NADPH + H(+). The enzyme catalyses (3R)-3-hydroxybutanoyl-CoA + NADP(+) = acetoacetyl-CoA + NADPH + H(+). The protein operates within biopolymer metabolism; poly-(R)-3-hydroxybutanoate biosynthesis. Its function is as follows. Catalyzes the chiral reduction of acetoacetyl-CoA to (R)-3-hydroxybutyryl-CoA. Is involved in the biosynthesis of polyhydroxybutyrate (PHB), which is accumulated as an intracellular energy reserve material when cells grow under conditions of nutrient limitation. The chain is Acetoacetyl-CoA reductase from Cupriavidus necator (strain ATCC 17699 / DSM 428 / KCTC 22496 / NCIMB 10442 / H16 / Stanier 337) (Ralstonia eutropha).